Reading from the N-terminus, the 176-residue chain is Ribosome rescue factor SmrB (176 aa).

Residues 97–172 form the Smr domain; it reads LDMHGMTQQE…GNGALLVLID (76 aa).

Belongs to the SmrB family. As to quaternary structure, associates with collided ribosomes, but not with correctly translating polysomes.

Acts as a ribosome collision sensor. Detects stalled/collided disomes (pairs of ribosomes where the leading ribosome is stalled and a second ribosome has collided with it) and endonucleolytically cleaves mRNA at the 5' boundary of the stalled ribosome. Stalled/collided disomes form a new interface (primarily via the 30S subunits) that binds SmrB. Cleaved mRNA becomes available for tmRNA ligation, leading to ribosomal subunit dissociation and rescue of stalled ribosomes. This chain is Ribosome rescue factor SmrB, found in Photobacterium profundum (strain SS9).